The following is a 390-amino-acid chain: S-adenosylmethionine synthase (390 aa).

Glu12 lines the Mg(2+) pocket. His18 is a binding site for ATP. Residue Glu46 coordinates K(+). L-methionine contacts are provided by Glu59 and Gln102. Residues 170 to 172 (DGK), 238 to 241 (SGRF), Asp249, 255 to 256 (RK), Ala272, Lys276, and Lys280 contribute to the ATP site. Asp249 contacts L-methionine. An L-methionine-binding site is contributed by Lys280.

Belongs to the AdoMet synthase family. Homotetramer. It depends on Mn(2+) as a cofactor. The cofactor is Mg(2+). Co(2+) serves as cofactor. K(+) is required as a cofactor.

Its subcellular location is the cytoplasm. It catalyses the reaction L-methionine + ATP + H2O = S-adenosyl-L-methionine + phosphate + diphosphate. It functions in the pathway amino-acid biosynthesis; S-adenosyl-L-methionine biosynthesis; S-adenosyl-L-methionine from L-methionine: step 1/1. Catalyzes the formation of S-adenosylmethionine from methionine and ATP. The reaction comprises two steps that are both catalyzed by the same enzyme: formation of S-adenosylmethionine (AdoMet) and triphosphate, and subsequent hydrolysis of the triphosphate. The polypeptide is S-adenosylmethionine synthase (METM) (Chlamydomonas reinhardtii (Chlamydomonas smithii)).